A 339-amino-acid polypeptide reads, in one-letter code: Uroporphyrinogen decarboxylase (339 aa).

Substrate contacts are provided by residues 23–27 (RQAGR), Asp-72, Tyr-147, Ser-202, and His-315.

It belongs to the uroporphyrinogen decarboxylase family. As to quaternary structure, homodimer.

The protein resides in the cytoplasm. It carries out the reaction uroporphyrinogen III + 4 H(+) = coproporphyrinogen III + 4 CO2. It participates in porphyrin-containing compound metabolism; protoporphyrin-IX biosynthesis; coproporphyrinogen-III from 5-aminolevulinate: step 4/4. In terms of biological role, catalyzes the decarboxylation of four acetate groups of uroporphyrinogen-III to yield coproporphyrinogen-III. This is Uroporphyrinogen decarboxylase from Desulfotalea psychrophila (strain LSv54 / DSM 12343).